The primary structure comprises 1186 residues: ATP-dependent helicase/deoxyribonuclease subunit B (1186 aa).

Belongs to the helicase family. AddB/RexB type 2 subfamily. As to quaternary structure, heterodimer of AddA and RexB. Requires Mg(2+) as cofactor.

Functionally, the heterodimer acts as both an ATP-dependent DNA helicase and an ATP-dependent, dual-direction single-stranded exonuclease. Recognizes the chi site generating a DNA molecule suitable for the initiation of homologous recombination. This subunit has 5' -&gt; 3' nuclease activity but not helicase activity. In Latilactobacillus sakei subsp. sakei (strain 23K) (Lactobacillus sakei subsp. sakei), this protein is ATP-dependent helicase/deoxyribonuclease subunit B.